The following is a 503-amino-acid chain: Maturase K (503 aa).

Belongs to the intron maturase 2 family. MatK subfamily.

It is found in the plastid. Its subcellular location is the chloroplast. In terms of biological role, usually encoded in the trnK tRNA gene intron. Probably assists in splicing its own and other chloroplast group II introns. The protein is Maturase K of Lathyrus vestitus (Pacific pea).